A 493-amino-acid chain; its full sequence is MERSTPTGLLQQPKPFFMIFFVELWERFGYYGVQGILAVFFVQQLGFSQEQAFVTFGAFAALVYGLISIGGYVGDHLLGTKRTMVLGAVVLAAGYFATGLSLYQPNLIFFALGTIAVGNGLFKANPASLLSKCYPPKDPRLDGAFTLFYMSINIGSLLSLSLAPVIAERFGYTVTYYLCGIGLIFALLVYFCCRHMVRHIGSEPDTKPLNWRNLLLVLLGSAVMICVCAWLMNHVFIANLVLIALSLIVVFIFFREASKQDRLGRNKMFVAFILMIEAIVFYVLYAQMPTSLNFFAINNVHHEILGFSINPVSFQALNPFWVVVASPILASIYTRLGSQNRDLSMPAKFTLGMFLCSLGFLTAAAAGMWFADAQGLTSPWFIVLVYLFQSLGELMISALGLAMVAALVPQYLMGFILGMWFLTQAASFLIGGYVATFTATPEGMTDPLETLPIYTDVFGKIGMVTLVIALVMALLIPWLNRMINSSAAEDAVA.

At 1-27 (MERSTPTGLLQQPKPFFMIFFVELWER) the chain is on the cytoplasmic side. Residues 28-48 (FGYYGVQGILAVFFVQQLGFS) traverse the membrane as a helical segment. The Periplasmic portion of the chain corresponds to 49 to 52 (QEQA). The helical transmembrane segment at 53-73 (FVTFGAFAALVYGLISIGGYV) threads the bilayer. Residues 74–82 (GDHLLGTKR) are Cytoplasmic-facing. Residues 83–103 (TMVLGAVVLAAGYFATGLSLY) form a helical membrane-spanning segment. The Periplasmic portion of the chain corresponds to 104 to 106 (QPN). A helical membrane pass occupies residues 107–127 (LIFFALGTIAVGNGLFKANPA). At 128–146 (SLLSKCYPPKDPRLDGAFT) the chain is on the cytoplasmic side. The helical transmembrane segment at 147-167 (LFYMSINIGSLLSLSLAPVIA) threads the bilayer. At 168–169 (ER) the chain is on the periplasmic side. Residues 170-190 (FGYTVTYYLCGIGLIFALLVY) traverse the membrane as a helical segment. Over 191 to 212 (FCCRHMVRHIGSEPDTKPLNWR) the chain is Cytoplasmic. The next 2 helical transmembrane spans lie at 213–233 (NLLLVLLGSAVMICVCAWLMN) and 234–254 (HVFIANLVLIALSLIVVFIFF). Residues 255–267 (REASKQDRLGRNK) are Cytoplasmic-facing. The chain crosses the membrane as a helical span at residues 268 to 288 (MFVAFILMIEAIVFYVLYAQM). The Periplasmic segment spans residues 289-311 (PTSLNFFAINNVHHEILGFSINP). The chain crosses the membrane as a helical span at residues 312–332 (VSFQALNPFWVVVASPILASI). Topologically, residues 333 to 350 (YTRLGSQNRDLSMPAKFT) are cytoplasmic. Residues 351 to 371 (LGMFLCSLGFLTAAAAGMWFA) form a helical membrane-spanning segment. Residues 372-379 (DAQGLTSP) lie on the Periplasmic side of the membrane. The chain crosses the membrane as a helical span at residues 380 to 400 (WFIVLVYLFQSLGELMISALG). At 401-424 (LAMVAALVPQYLMGFILGMWFLTQ) the chain is on the cytoplasmic side. Residues 425–445 (AASFLIGGYVATFTATPEGMT) traverse the membrane as a helical segment. Residues 446–456 (DPLETLPIYTD) are Periplasmic-facing. Residues 457–477 (VFGKIGMVTLVIALVMALLIP) traverse the membrane as a helical segment. At 478–493 (WLNRMINSSAAEDAVA) the chain is on the cytoplasmic side.

This sequence belongs to the major facilitator superfamily. Proton-dependent oligopeptide transporter (POT/PTR) (TC 2.A.17) family. DtpB subfamily.

It localises to the cell inner membrane. Its function is as follows. Proton-dependent permease that transports di- and tripeptides. This chain is Dipeptide and tripeptide permease B, found in Yersinia enterocolitica serotype O:8 / biotype 1B (strain NCTC 13174 / 8081).